The sequence spans 443 residues: F-box only protein 39 (443 aa).

The 47-residue stretch at glutamine 13–arginine 59 folds into the F-box domain.

Directly interacts with SKP1 and CUL1.

Its function is as follows. Substrate-recognition component of the SCF (SKP1-CUL1-F-box protein)-type E3 ubiquitin ligase complex. This Mus musculus (Mouse) protein is F-box only protein 39 (Fbxo39).